The chain runs to 179 residues: Acireductone dioxygenase (179 aa).

Residues His-88, His-90, Glu-94, and His-133 each contribute to the Fe(2+) site. Ni(2+) is bound by residues His-88, His-90, Glu-94, and His-133.

This sequence belongs to the acireductone dioxygenase (ARD) family. In terms of assembly, monomer. Interacts with MMP14. Fe(2+) serves as cofactor. Requires Ni(2+) as cofactor.

The protein localises to the cytoplasm. Its subcellular location is the nucleus. The protein resides in the cell membrane. It carries out the reaction 1,2-dihydroxy-5-(methylsulfanyl)pent-1-en-3-one + O2 = 4-methylsulfanyl-2-oxobutanoate + formate + 2 H(+). It catalyses the reaction 1,2-dihydroxy-5-(methylsulfanyl)pent-1-en-3-one + O2 = 3-(methylsulfanyl)propanoate + CO + formate + 2 H(+). It functions in the pathway amino-acid biosynthesis; L-methionine biosynthesis via salvage pathway; L-methionine from S-methyl-5-thio-alpha-D-ribose 1-phosphate: step 5/6. Catalyzes 2 different reactions between oxygen and the acireductone 1,2-dihydroxy-3-keto-5-methylthiopentene (DHK-MTPene) depending upon the metal bound in the active site. Fe-containing acireductone dioxygenase (Fe-ARD) produces formate and 2-keto-4-methylthiobutyrate (KMTB), the alpha-ketoacid precursor of methionine in the methionine recycle pathway. Ni-containing acireductone dioxygenase (Ni-ARD) produces methylthiopropionate, carbon monoxide and formate, and does not lie on the methionine recycle pathway. The polypeptide is Acireductone dioxygenase (adi1) (Xenopus laevis (African clawed frog)).